A 235-amino-acid chain; its full sequence is RAD9, HUS1, RAD1-interacting nuclear orphan protein 1 (235 aa).

A Phosphoserine modification is found at Ser50. The RAD1-binding motif signature appears at 54–60; the sequence is SWVLPQF. A disordered region spans residues 66–106; it reads SRFPTHRKHHRDQARHPTRRSTCKFPRLTFESPESSSSETL. Positions 69-87 are enriched in basic residues; sequence PTHRKHHRDQARHPTRRST. Low complexity predominate over residues 96–106; sequence ESPESSSSETL. A D-box motif is present at residues 123-130; that stretch reads RRPLVPLF. Residues 156–198 form a disordered region; sequence QTPGSSVREDPISPDQKENSLPSCILGPRTPRTPEPGPVLVKD. The segment covering 162–173 has biased composition (basic and acidic residues); the sequence is VREDPISPDQKE. A KEN box motif is present at residues 171-175; the sequence is QKENS.

As to quaternary structure, interacts (when phosphorylated by PLK1) with POLQ; promoting POLQ recruitment to DNA damage sites. Interacts with RAD1; interaction is direct and promotes association with the 9-1-1 (RAD9-RAD1-HUS1) complex. Interacts with RAD18. Interacts with TOPBP1. Interacts with UBE2N. Post-translationally, phosphorylated at Ser-50 by PLK1, promoting interaction with polymerase theta (POLQ). In terms of processing, ubiquitinated and degraded by the APC/C complex upon mitotic exit.

It is found in the nucleus. The protein resides in the chromosome. Functionally, involved in microhomology-mediated end-joining (MMEJ) DNA repair by promoting recruitment of polymerase theta (POLQ) to DNA damage sites during mitosis. MMEJ is an alternative non-homologous end-joining (NHEJ) machinery that takes place during mitosis to repair double-strand breaks in DNA that originate in S-phase. Accumulates in M-phase; following phosphorylation by PLK1, interacts with POLQ, enabling its recruitment to double-strand breaks for subsequent repair. Also involved in the DNA damage response (DDR) signaling in response to genotoxic stresses such as ionizing radiation (IR) during the S phase. Recruited to sites of DNA damage through interaction with the 9-1-1 cell-cycle checkpoint response complex and TOPBP1 in a ATR-dependent manner. Required for the progression of the G1 to S phase transition. Plays a role in the stimulation of CHEK1 phosphorylation. The protein is RAD9, HUS1, RAD1-interacting nuclear orphan protein 1 (Rhno1) of Rattus norvegicus (Rat).